Consider the following 1078-residue polypeptide: mRNA 3'-end-processing protein rna14 (1078 aa).

2 disordered regions span residues 15 to 209 (AMNA…DTPA) and 222 to 251 (QSENMQDSAAATPVPDSPSTSKGRLPHDRV). The segment covering 42–55 (KTLQDQYSASILDS) has biased composition (polar residues). Over residues 58–68 (SEIAPSSASPS) the composition is skewed to low complexity. Polar residues predominate over residues 82–115 (DPSQPADSAYPSQTPSRADSQASVSAPASGTSVP). A compositionally biased stretch (acidic residues) spans 126–139 (VEDEDEDDAGDADY). Composition is skewed to polar residues over residues 151–170 (NTISMNVPQQPISGNANEDT) and 190–206 (FPNSSYTPASAAASKSD). HAT repeat units lie at residues 280–312 (NRIDSAREVYERFLTAFPFSAEQWVAYATMESE), 314–345 (NELYRLEQIFNRTLLTIPDVQLWTVYLDYVRR), 356–391 (QSRRIISSAYDLALQYVGVDKDSGSIWTDYVQFIRS), 405–438 (QKMDLLRKAYQKAICVPTQAVNNLWKEYDQFEMG), 475–508 (TTLPRLPPVLGSDGDIEFGQQVDIWKRWIKWEKG), and 520–552 (AFKARVIYVYKQALMALRFLPEIWFEAAEFCFL). Disordered stretches follow at residues 632–663 (ETFAKINPDTQPSKTDDDDDDQSDSKARESMK) and 851–950 (PTVV…QGSP). Over residues 879 to 894 (GTPSSRYPDASVTNSP) the composition is skewed to polar residues. Residues 896–907 (RPLEDFDDEMNR) show a composition bias toward basic and acidic residues. Over residues 931 to 949 (RTQQVISNQTGSQFRSQGS) the composition is skewed to polar residues.

It localises to the nucleus. The protein localises to the cytoplasm. In terms of biological role, component of the cleavage factor IA (CFIA) complex, which is involved in the endonucleolytic cleavage during polyadenylation-dependent pre-mRNA 3'-end formation. This Aspergillus oryzae (strain ATCC 42149 / RIB 40) (Yellow koji mold) protein is mRNA 3'-end-processing protein rna14 (rna14).